A 723-amino-acid chain; its full sequence is Nuclear hormone receptor HR96 (723 aa).

A DNA-binding region (nuclear receptor) is located at residues 4–79 (PKNCAVCGDK…IGMKSENIMS (76 aa)). 2 consecutive NR C4-type zinc fingers follow at residues 7-27 (CAVCGDKALGYNFNAVTCESC) and 43-67 (CPFNQNCDITVVTRRFCQKCRLRKC). The interval 95–163 (AKRRLMENGT…QASSPGTQVN (69 aa)) is disordered. Polar residues-rich tracts occupy residues 122-142 (DSSSSNLDHYSGSQDSQSCGS) and 151-163 (SGRQASSPGTQVN). One can recognise an NR LBD domain in the interval 483 to 723 (EQMKLRELRL…LREIFDLKNH (241 aa)).

The protein belongs to the nuclear hormone receptor family. NR1 subfamily.

Its subcellular location is the nucleus. Its function is as follows. Binds selectively to the HSP27 20E response element. The protein is Nuclear hormone receptor HR96 (Hr96) of Drosophila melanogaster (Fruit fly).